A 735-amino-acid chain; its full sequence is Transcription factor RFX4 (735 aa).

Residues 27-59 are disordered; sequence NKRYSSHTSLGNVSNDENEEKENNRASKPHSTP. A compositionally biased stretch (polar residues) spans 32–41; it reads SHTSLGNVSN. A DNA-binding region spans residues 44-126; it reads NEEKENNRAS…RRLGTRGQSK (83 aa). The RFX-type winged-helix DNA-binding region spans 61 to 136; sequence TLQWLEENYE…YHYYGIAVKE (76 aa). The segment at 315–487 is necessary for dimerization; it reads RFSQILRRQT…NELMRAMKGE (173 aa). Residues 501–538 form a disordered region; it reads EATPPTPSPGPSFSPAKSATSVEVPPPSSPVSNPSPEY.

Belongs to the RFX family. As to quaternary structure, homodimer. Heterodimer with RFX2 and RFX3. Binds DNA. Interacts with GPS2. In terms of tissue distribution, isoform 1: Brain-specific. Isoform 2: Testis-specific. Isoform 1: Highly expressed in the suprachiasmatic nucleus, the central pacemaker site of the circadian clock (at protein level).

Its subcellular location is the nucleus. Functionally, transcription factor that plays a role in early brain development. May activate transcription by interacting directly with the X-box. May activate transcription from CX3CL1 promoter through the X-box during brain development. May be required for neural tube ciliogenesis during embryogenesis. The polypeptide is Transcription factor RFX4 (Rfx4) (Mus musculus (Mouse)).